The chain runs to 478 residues: Isoeugenol monooxygenase (478 aa).

4 residues coordinate Fe cation: histidine 167, histidine 218, histidine 282, and histidine 471.

It belongs to the carotenoid oxygenase family. In terms of assembly, monomer. It depends on Fe(2+) as a cofactor.

It catalyses the reaction (E)-isoeugenol + O2 = vanillin + acetaldehyde. Its activity is regulated as follows. Inhibited by HgCl(2), AgNO(3), CuCl(2), phenylhydrazine, 8-hydroxyquinoline, R-cycloserine and p-chloromercuribenzoic acid. Involved in isoeugenol degradation. Catalyzes the oxidative cleavage of the side chain double-bond of isoeugenol to form vanillin and acetaldehyde. The sequence is that of Isoeugenol monooxygenase from Pseudomonas putida (Arthrobacter siderocapsulatus).